Consider the following 277-residue polypeptide: Coiled-coil domain-containing protein 117 (277 aa).

The tract at residues 22 to 69 is disordered; sequence SPPAFAGRAFPPGAAGHDLAPRPGVRGPPSSPDGRTARGRVSIHCRKK. Low complexity predominate over residues 23 to 55; that stretch reads PPAFAGRAFPPGAAGHDLAPRPGVRGPPSSPDG. R47 carries the omega-N-methylarginine modification. S52 bears the Phosphoserine mark. A compositionally biased stretch (basic residues) spans 58-69; it reads ARGRVSIHCRKK. A coiled-coil region spans residues 139 to 166; sequence QCEVARRRLQEIEDRIIDEDEEVESDRN. 2 disordered regions span residues 216 to 242 and 255 to 277; these read LSEK…ATGT and QCTD…EMEL. The span at 225 to 242 shows a compositional bias: polar residues; it reads NPKNYMGESQTKHTATGT.

Interacts with CIAO2B; the interaction is direct. Interacts with MMS19; the interaction is indirect.

Its subcellular location is the cytoplasm. The protein resides in the cytoskeleton. It is found in the spindle. It localises to the nucleus. In terms of biological role, facilitates DNA repair, cell cycle progression, and cell proliferation through its interaction with CIAO2B. In Rattus norvegicus (Rat), this protein is Coiled-coil domain-containing protein 117.